A 589-amino-acid chain; its full sequence is V-type ATP synthase alpha chain (589 aa).

An ATP-binding site is contributed by 232-239; that stretch reads GPFGSGKT.

Belongs to the ATPase alpha/beta chains family.

It carries out the reaction ATP + H2O + 4 H(+)(in) = ADP + phosphate + 5 H(+)(out). In terms of biological role, produces ATP from ADP in the presence of a proton gradient across the membrane. The V-type alpha chain is a catalytic subunit. The protein is V-type ATP synthase alpha chain of Acetivibrio thermocellus (strain ATCC 27405 / DSM 1237 / JCM 9322 / NBRC 103400 / NCIMB 10682 / NRRL B-4536 / VPI 7372) (Clostridium thermocellum).